A 490-amino-acid chain; its full sequence is ATP synthase subunit beta, chloroplastic (490 aa).

170 to 177 (GGAGVGKT) is an ATP binding site.

The protein belongs to the ATPase alpha/beta chains family. F-type ATPases have 2 components, CF(1) - the catalytic core - and CF(0) - the membrane proton channel. CF(1) has five subunits: alpha(3), beta(3), gamma(1), delta(1), epsilon(1). CF(0) has four main subunits: a(1), b(1), b'(1) and c(9-12).

It is found in the plastid. The protein localises to the chloroplast thylakoid membrane. It catalyses the reaction ATP + H2O + 4 H(+)(in) = ADP + phosphate + 5 H(+)(out). Functionally, produces ATP from ADP in the presence of a proton gradient across the membrane. The catalytic sites are hosted primarily by the beta subunits. The protein is ATP synthase subunit beta, chloroplastic of Convolvulus arvensis (Field bindweed).